We begin with the raw amino-acid sequence, 440 residues long: Ferredoxin--NADP reductase (440 aa).

Residues 17–75 form the CpcD-like domain; sequence SRVFVYEVVGMRQNEETDQTNYPIRKSGSVFIRVPYNRMNQEMQRITRLGGKIVTIQTV. Residues 99 to 142 form a disordered region; the sequence is KSEGNGKATPVKTDSGAKAFAKPPAEEQLKKKDNKGNTMTQAKA. The span at 122 to 133 shows a compositional bias: basic and acidic residues; that stretch reads PAEEQLKKKDNK. In terms of domain architecture, FAD-binding FR-type spans 155–279; it reads NAPFIGKVIS…TGPVGKEMLL (125 aa). FAD is bound by residues 214–217, 235–237, Y241, 253–255, and T294; these read RLYS, CVR, and VCS. Residues S217 and R237 each coordinate NADP(+). NADP(+)-binding positions include T294, 330 to 331, 360 to 361, 370 to 374, 399 to 400, and E438; these read VP, SR, RMYIQ, and GL.

Belongs to the ferredoxin--NADP reductase type 1 family. It depends on FAD as a cofactor.

Its subcellular location is the cellular thylakoid membrane. The enzyme catalyses 2 reduced [2Fe-2S]-[ferredoxin] + NADP(+) + H(+) = 2 oxidized [2Fe-2S]-[ferredoxin] + NADPH. This chain is Ferredoxin--NADP reductase (petH), found in Nostoc sp. (strain ATCC 29151 / PCC 7119) (Anabaena sp.).